Here is a 487-residue protein sequence, read N- to C-terminus: Acetylcholine receptor subunit beta-type acr-3 (487 aa).

A signal peptide spans 1 to 20 (MQKIWLFSIITIFLITELQC). Over 21 to 231 (YPNSAEERLL…KIRRKALFYT (211 aa)) the chain is Extracellular. The N-linked (GlcNAc...) asparagine glycan is linked to Asn46. A disulfide bridge connects residues Cys151 and Cys165. 3 helical membrane passes run 232-252 (VILIMPTVLMAFLSMMVFYLP), 259-279 (ITLAISILLALVVFLLVVSKI), and 294-314 (LLMTFIMNMITIMVSVIIINV). The Cytoplasmic portion of the chain corresponds to 315-439 (YFRGPATHIM…WKFVSVVIDR (125 aa)). Positions 380–400 (ISEQPKQTSRKDGSSSEEKLS) are disordered. The helical transmembrane segment at 440 to 460 (LLLYLFFAVTTGGTVGILLSA) threads the bilayer.

This sequence belongs to the ligand-gated ion channel (TC 1.A.9) family. Acetylcholine receptor (TC 1.A.9.1) subfamily. In terms of assembly, component of nicotinic acetylcholine receptor. In cholinergic motoneurons, composed of 2 non-alpha subunits acr-2 and acr-3, and 3 alpha subunits unc-38, unc-63 and acr-12.

It is found in the postsynaptic cell membrane. The protein resides in the cell membrane. Its function is as follows. Non-alpha subunit of nicotinic acetylcholine receptor (nAChR). Probably acts in cholinergic motoneurons to regulate presynaptic neurotransmitter release, thereby ensuring normal level of excitation of cholinergic motoneurons during locomotion. This chain is Acetylcholine receptor subunit beta-type acr-3 (acr-3), found in Caenorhabditis elegans.